The sequence spans 255 residues: Thiazole synthase (255 aa).

Catalysis depends on Lys96, which acts as the Schiff-base intermediate with DXP. Residues Gly157, 183–184, and 205–206 each bind 1-deoxy-D-xylulose 5-phosphate; these read AG and NT.

The protein belongs to the ThiG family. In terms of assembly, homotetramer. Forms heterodimers with either ThiH or ThiS.

The protein resides in the cytoplasm. The catalysed reaction is [ThiS sulfur-carrier protein]-C-terminal-Gly-aminoethanethioate + 2-iminoacetate + 1-deoxy-D-xylulose 5-phosphate = [ThiS sulfur-carrier protein]-C-terminal Gly-Gly + 2-[(2R,5Z)-2-carboxy-4-methylthiazol-5(2H)-ylidene]ethyl phosphate + 2 H2O + H(+). The protein operates within cofactor biosynthesis; thiamine diphosphate biosynthesis. Functionally, catalyzes the rearrangement of 1-deoxy-D-xylulose 5-phosphate (DXP) to produce the thiazole phosphate moiety of thiamine. Sulfur is provided by the thiocarboxylate moiety of the carrier protein ThiS. In vitro, sulfur can be provided by H(2)S. This is Thiazole synthase from Heliobacterium modesticaldum (strain ATCC 51547 / Ice1).